The chain runs to 232 residues: 7-cyano-7-deazaguanine synthase (232 aa).

Residue 8 to 18 (LSGGLDSATVL) coordinates ATP. Zn(2+) contacts are provided by cysteine 188, cysteine 198, cysteine 201, and cysteine 204.

Belongs to the QueC family. Requires Zn(2+) as cofactor.

The catalysed reaction is 7-carboxy-7-deazaguanine + NH4(+) + ATP = 7-cyano-7-deazaguanine + ADP + phosphate + H2O + H(+). Its pathway is purine metabolism; 7-cyano-7-deazaguanine biosynthesis. In terms of biological role, catalyzes the ATP-dependent conversion of 7-carboxy-7-deazaguanine (CDG) to 7-cyano-7-deazaguanine (preQ(0)). In Nitrosospira multiformis (strain ATCC 25196 / NCIMB 11849 / C 71), this protein is 7-cyano-7-deazaguanine synthase.